The chain runs to 644 residues: DNA mismatch repair protein MutL (644 aa).

A disordered region spans residues 336 to 356 (KRNINPLNRDDKTKDKSEYQK). Positions 343 to 356 (NRDDKTKDKSEYQK) are enriched in basic and acidic residues.

Belongs to the DNA mismatch repair MutL/HexB family.

Its function is as follows. This protein is involved in the repair of mismatches in DNA. It is required for dam-dependent methyl-directed DNA mismatch repair. May act as a 'molecular matchmaker', a protein that promotes the formation of a stable complex between two or more DNA-binding proteins in an ATP-dependent manner without itself being part of a final effector complex. The chain is DNA mismatch repair protein MutL from Halothermothrix orenii (strain H 168 / OCM 544 / DSM 9562).